Reading from the N-terminus, the 62-residue chain is UPF0337 protein XAC0100 (62 aa).

This sequence belongs to the UPF0337 (CsbD) family.

This chain is UPF0337 protein XAC0100, found in Xanthomonas axonopodis pv. citri (strain 306).